A 534-amino-acid polypeptide reads, in one-letter code: Cytochrome P450 monooxygenase AN1598 (534 aa).

Asn-3 is a glycosylation site (N-linked (GlcNAc...) asparagine). A helical transmembrane segment spans residues 25–45; it reads LYLEILGVLSVVYLLQTLVAY. N-linked (GlcNAc...) asparagine glycosylation occurs at Asn-95. Position 464 (Cys-464) interacts with heme. Residue Asn-498 is glycosylated (N-linked (GlcNAc...) asparagine).

It belongs to the cytochrome P450 family. Heme is required as a cofactor.

Its subcellular location is the membrane. It participates in secondary metabolite biosynthesis; terpenoid biosynthesis. Functionally, bifunctional terpene synthase; part of the gene cluster that mediates the biosynthesis of the diterpene ent-pimara-8(14),15-diene (PD). Within the cluster, the HMG-CoA reductase AN1593 functions in the mevalonate pathway, which produces isoprenoid precursors. The geranylgeranyl pyrophosphate (GGPP) synthase AN1592 is needed in the formation of GGPP, the precursor for diterpenes. Lastly, the pimaradiene synthase pbcA performs the 2 cyclization steps that convert GGPP to ent-pimara-8(14),15-diene. The putative roles of the remaining cluster enzymes in ent-pimara-8(14),15-diene biosynthesis is unclear. The cytochrome P450 monooxygenase AN1598, the glutathione S-transferase AN1595, the oxidoreductases AN1596 and AN1597 probably function as decorative enzymes. It is possible that in biological conditions the compound is oxidized to ent-pimara-8(14),15-dien-19-oic acid, which is a bioactive diterpene compound predominant in many plant extracts. The polypeptide is Cytochrome P450 monooxygenase AN1598 (Emericella nidulans (strain FGSC A4 / ATCC 38163 / CBS 112.46 / NRRL 194 / M139) (Aspergillus nidulans)).